The primary structure comprises 387 residues: Alpha-sarcoglycan (387 aa).

An N-terminal signal peptide occupies residues 1–23 (MAATLTWILLFVGLLAGLRDTKA). The Extracellular portion of the chain corresponds to 24-290 (QQTTLYPLVG…ATGRDFLADA (267 aa)). N-linked (GlcNAc...) asparagine glycans are attached at residues asparagine 174 and asparagine 246. The helical transmembrane segment at 291-311 (LVTLLVPLLVALLLTLLLAYI) threads the bilayer. The Cytoplasmic portion of the chain corresponds to 312–387 (MCCRREGQLK…AQVPLILDQH (76 aa)). Phosphoserine is present on serine 377.

Belongs to the sarcoglycan alpha/epsilon family. As to quaternary structure, interacts with the syntrophin SNTA1. Cross-link to form 2 major subcomplexes: one consisting of SGCB, SGCD and SGCG and the other consisting of SGCB and SGCD. The association between SGCB and SGCG is particularly strong while SGCA is loosely associated with the other sarcoglycans. As to expression, strongly expressed in skeletal and heart muscle.

It is found in the cell membrane. The protein resides in the sarcolemma. Its subcellular location is the cytoplasm. The protein localises to the cytoskeleton. Functionally, component of the sarcoglycan complex, a subcomplex of the dystrophin-glycoprotein complex which forms a link between the F-actin cytoskeleton and the extracellular matrix. This is Alpha-sarcoglycan (SGCA) from Mesocricetus auratus (Golden hamster).